We begin with the raw amino-acid sequence, 144 residues long: uncharacterized protein (144 aa).

The next 4 helical transmembrane spans lie at 7 to 29 (FPASVLQIALALFLLASGARDLV), 51 to 73 (VAIGVLTLAVSLCCLTAGFFLLV), 85 to 107 (AVLALFVVLWALNMVLVDVVGAF), and 122 to 139 (HLHHTAVDLLVLGALIFV).

The protein resides in the cell membrane. This is an uncharacterized protein from Treponema pallidum (strain Nichols).